The primary structure comprises 294 residues: Acetylglutamate kinase (294 aa).

Residues 69-70, arginine 91, and asparagine 190 contribute to the substrate site; that span reads GG.

Belongs to the acetylglutamate kinase family. ArgB subfamily.

It is found in the cytoplasm. The catalysed reaction is N-acetyl-L-glutamate + ATP = N-acetyl-L-glutamyl 5-phosphate + ADP. The protein operates within amino-acid biosynthesis; L-arginine biosynthesis; N(2)-acetyl-L-ornithine from L-glutamate: step 2/4. Its function is as follows. Catalyzes the ATP-dependent phosphorylation of N-acetyl-L-glutamate. In Mycobacterium tuberculosis (strain CDC 1551 / Oshkosh), this protein is Acetylglutamate kinase.